A 473-amino-acid polypeptide reads, in one-letter code: Vasculin (473 aa).

Disordered regions lie at residues 1-25 (MAQH…SSLN), 44-170 (RRRH…SRTP), and 186-341 (SGFP…HQER). Ser49 carries the post-translational modification Phosphoserine. Omega-N-methylarginine is present on Arg87. Polar residues predominate over residues 94-117 (NSRSRSSIFHSGKSQGLHENSIPD). A compositionally biased stretch (basic and acidic residues) spans 119-133 (ETGRKEDKRERRQFE). Polar residues-rich tracts occupy residues 193 to 204 (NLQSQPVKNGTG) and 248 to 286 (NFNT…QQPR). 4 positions are modified to phosphoserine: Ser274, Ser276, Ser322, and Ser381. A compositionally biased stretch (basic and acidic residues) spans 293–329 (MRSDKKSEFLKALKRDRVEEEHEDESHAGSEKDDDSF). The tract at residues 450–473 (TFKPTIENDDTETSSSDTSDDDDV) is disordered. The span at 456-473 (ENDDTETSSSDTSDDDDV) shows a compositional bias: acidic residues.

It belongs to the vasculin family. As to quaternary structure, interacts with GTF2B, GTF2F2, RNA polymerase II and TBP. In terms of tissue distribution, ubiquitously expressed (at protein level).

It is found in the nucleus. Its function is as follows. Functions as a GC-rich promoter-specific transactivating transcription factor. The chain is Vasculin (Gpbp1) from Mus musculus (Mouse).